Consider the following 33-residue polypeptide: DNA-directed RNA polymerase subunit beta' (33 aa).

It belongs to the RNA polymerase beta' chain family. RpoC1 subfamily. In terms of assembly, in plastids the minimal PEP RNA polymerase catalytic core is composed of four subunits: alpha, beta, beta', and beta''. When a (nuclear-encoded) sigma factor is associated with the core the holoenzyme is formed, which can initiate transcription.

It localises to the plastid. It is found in the chloroplast. The enzyme catalyses RNA(n) + a ribonucleoside 5'-triphosphate = RNA(n+1) + diphosphate. Its function is as follows. DNA-dependent RNA polymerase catalyzes the transcription of DNA into RNA using the four ribonucleoside triphosphates as substrates. This Heterosigma akashiwo (Chromophytic alga) protein is DNA-directed RNA polymerase subunit beta' (rpoC1).